Here is a 124-residue protein sequence, read N- to C-terminus: Putative C(50) carotenoid beta-cyclase subunit A (124 aa).

Helical transmembrane passes span 1–21, 34–54, and 78–98; these read MIGLSYLLVQVVSFAGILVID, AAALAVTASVALLLTWDVLGV, and FEEVVFLAFLSHLALVCAAGV.

The protein belongs to the lycopene beta-cyclase family. As to quaternary structure, may form a complex with LbtBC.

It localises to the cell membrane. It participates in carotenoid biosynthesis. Its function is as follows. Involved in the biosynthesis of C(50) beta-cyclic carotenoids. May have C(50) carotenoid beta-cyclase activity and produce the C(50) beta-cyclic carotenoid C.p.450 from the C(50) carotenoid dihydrobisanhydrobacterioruberin (DH-BABR). The sequence is that of Putative C(50) carotenoid beta-cyclase subunit A from Dietzia sp. (strain CQ4).